The sequence spans 497 residues: Acetyl-coenzyme A carboxylase carboxyl transferase subunit beta (497 aa).

In terms of domain architecture, CoA carboxyltransferase N-terminal spans 217–489 (LWLQCDNCYG…NQNSNQYSQY (273 aa)). Residues C221, C224, C240, and C243 each contribute to the Zn(2+) site. The segment at 221–243 (CDNCYGLNYKKVLKSKMTICEQC) adopts a C4-type zinc-finger fold.

This sequence belongs to the AccD/PCCB family. Acetyl-CoA carboxylase is a heterohexamer composed of biotin carboxyl carrier protein, biotin carboxylase and 2 subunits each of ACCase subunit alpha and ACCase plastid-coded subunit beta (accD). Zn(2+) is required as a cofactor.

It is found in the plastid. The catalysed reaction is N(6)-carboxybiotinyl-L-lysyl-[protein] + acetyl-CoA = N(6)-biotinyl-L-lysyl-[protein] + malonyl-CoA. It functions in the pathway lipid metabolism; malonyl-CoA biosynthesis; malonyl-CoA from acetyl-CoA: step 1/1. In terms of biological role, component of the acetyl coenzyme A carboxylase (ACC) complex. Biotin carboxylase (BC) catalyzes the carboxylation of biotin on its carrier protein (BCCP) and then the CO(2) group is transferred by the transcarboxylase to acetyl-CoA to form malonyl-CoA. This Cuscuta reflexa (Southern Asian dodder) protein is Acetyl-coenzyme A carboxylase carboxyl transferase subunit beta.